Reading from the N-terminus, the 395-residue chain is MAKKTIRDIDWSGKRALVRVDFNVPLENGQITDDTRIRAALPTIRYLLEHGAAVILMSHLGRPKNKVVESMRLAPVVARLAELLPEAKAVKGSQATTGPAAEAAARDLKPGEVLVLENTRFDPREEANDESMARELAKLGDVYVNDAFGSAHRAHASTEGVARFLPAVAGFLMEAELAALQGALENPARPFVTIIGGAKISDKIGVIENLLGKVDALLIGGGMANTFLLAQGHEMGDSLVEPDSAPIAKSLLDQAAQRGVRLMLPTDVVIADAFSADANRKVVPVGEIPPGWRALDIGPETIRAYTEVITGAQTVIWNGPMGVFELAPFAEGTRAIAQAMANCPGMTIIGGGDSVAAIEQMGLADKIRHISTGGGASLELLEGRILPGVAALNDA.

Substrate-binding positions include 21–23 (DFN), R36, 59–62 (HLGR), R120, and R153. ATP-binding positions include K203, E325, and 351–354 (GGDS).

The protein belongs to the phosphoglycerate kinase family. Monomer.

The protein resides in the cytoplasm. It catalyses the reaction (2R)-3-phosphoglycerate + ATP = (2R)-3-phospho-glyceroyl phosphate + ADP. It participates in carbohydrate degradation; glycolysis; pyruvate from D-glyceraldehyde 3-phosphate: step 2/5. This Roseiflexus castenholzii (strain DSM 13941 / HLO8) protein is Phosphoglycerate kinase.